The sequence spans 75 residues: Sec-independent protein translocase protein TatA (75 aa).

Residues 1 to 21 traverse the membrane as a helical segment; it reads MGMPSMPELLIVLAIVVLLFG. The tract at residues 47–75 is disordered; that stretch reads DEEEEVKEITKKEEPKVEAAAEEKKSENA. A compositionally biased stretch (basic and acidic residues) spans 53-75; it reads KEITKKEEPKVEAAAEEKKSENA.

Belongs to the TatA/E family. In terms of assembly, the Tat system comprises two distinct complexes: a TatABC complex, containing multiple copies of TatA, TatB and TatC subunits, and a separate TatA complex, containing only TatA subunits. Substrates initially bind to the TatABC complex, which probably triggers association of the separate TatA complex to form the active translocon.

The protein localises to the cell inner membrane. Part of the twin-arginine translocation (Tat) system that transports large folded proteins containing a characteristic twin-arginine motif in their signal peptide across membranes. TatA could form the protein-conducting channel of the Tat system. In Sulfurovum sp. (strain NBC37-1), this protein is Sec-independent protein translocase protein TatA.